A 386-amino-acid polypeptide reads, in one-letter code: O-phospho-L-seryl-tRNA:Cys-tRNA synthase (386 aa).

Pyridoxal 5'-phosphate-binding positions include 89–90 (AR), Asn196, and 219–221 (SGH). At Lys222 the chain carries N6-(pyridoxal phosphate)lysine.

This sequence belongs to the SepCysS family. In terms of assembly, homodimer. Interacts with SepRS. Requires pyridoxal 5'-phosphate as cofactor.

The catalysed reaction is O-phospho-L-seryl-tRNA(Cys) + hydrogen sulfide + H(+) = L-cysteinyl-tRNA(Cys) + phosphate. Functionally, converts O-phospho-L-seryl-tRNA(Cys) (Sep-tRNA(Cys)) to L-cysteinyl-tRNA(Cys) (Cys-tRNA(Cys)). The protein is O-phospho-L-seryl-tRNA:Cys-tRNA synthase of Methanosarcina acetivorans (strain ATCC 35395 / DSM 2834 / JCM 12185 / C2A).